Here is a 366-residue protein sequence, read N- to C-terminus: Peptide chain release factor 2 (366 aa).

Residue Gln251 is modified to N5-methylglutamine.

The protein belongs to the prokaryotic/mitochondrial release factor family. Post-translationally, methylated by PrmC. Methylation increases the termination efficiency of RF2.

Its subcellular location is the cytoplasm. Peptide chain release factor 2 directs the termination of translation in response to the peptide chain termination codons UGA and UAA. The protein is Peptide chain release factor 2 (prfB) of Bacillus subtilis (strain 168).